We begin with the raw amino-acid sequence, 165 residues long: 6,7-dimethyl-8-ribityllumazine synthase (165 aa).

5-amino-6-(D-ribitylamino)uracil is bound by residues Trp-26, 58 to 60 (SIE), and 80 to 82 (VVI). 85–86 (GT) serves as a coordination point for (2S)-2-hydroxy-3-oxobutyl phosphate. The active-site Proton donor is His-88. Asn-113 contributes to the 5-amino-6-(D-ribitylamino)uracil binding site. Arg-127 lines the (2S)-2-hydroxy-3-oxobutyl phosphate pocket.

It belongs to the DMRL synthase family.

It carries out the reaction (2S)-2-hydroxy-3-oxobutyl phosphate + 5-amino-6-(D-ribitylamino)uracil = 6,7-dimethyl-8-(1-D-ribityl)lumazine + phosphate + 2 H2O + H(+). Its pathway is cofactor biosynthesis; riboflavin biosynthesis; riboflavin from 2-hydroxy-3-oxobutyl phosphate and 5-amino-6-(D-ribitylamino)uracil: step 1/2. Its function is as follows. Catalyzes the formation of 6,7-dimethyl-8-ribityllumazine by condensation of 5-amino-6-(D-ribitylamino)uracil with 3,4-dihydroxy-2-butanone 4-phosphate. This is the penultimate step in the biosynthesis of riboflavin. The chain is 6,7-dimethyl-8-ribityllumazine synthase from Saccharopolyspora erythraea (strain ATCC 11635 / DSM 40517 / JCM 4748 / NBRC 13426 / NCIMB 8594 / NRRL 2338).